The chain runs to 480 residues: Sestrin-2 (480 aa).

At methionine 1 the chain carries N-acetylmethionine. The disordered stretch occupies residues 20–45 (PGGVGDSGPGEEQRESRARRGPRGPS). The N-terminal domain; mediates the alkylhydroperoxide reductase activity stretch occupies residues 66–239 (GLEALMSSGR…APTPPSEQSS (174 aa)). Catalysis depends on cysteine 125, which acts as the Cysteine sulfenic acid (-SOH) intermediate. Residue lysine 175 forms a Glycyl lysine isopeptide (Lys-Gly) (interchain with G-Cter in ubiquitin) linkage. The interval 222–252 (ADGSPAPQAPTPPSEQSSPPSRDPLNNSGGF) is disordered. Serine 249 carries the post-translational modification Phosphoserine. The segment at 308–480 (PHPDMLCFVE…ALRAITRYMT (173 aa)) is C-terminal domain; mediates TORC1 regulation. L-leucine-binding positions include 374-377 (TYNT), threonine 386, and glutamate 451.

This sequence belongs to the sestrin family. Interacts with the GATOR2 complex which is composed of MIOS, SEC13, SEH1L, WDR24 and WDR59; the interaction is negatively regulated by leucine. Conveys leucine availability via direct interaction with SEH1L and WDR24 components of the GATOR2 complex. Interacts with RRAGA, RRAGB, RRAGC and RRAGD; may function as a guanine nucleotide dissociation inhibitor for RRAGs and regulate them. May interact with the TORC2 complex. Interacts with KEAP1, RBX1, SQSTM and ULK1; to regulate the degradation of KEAP1. May also associate with the complex composed of TSC1, TSC2 and the AMP-responsive protein kinase/AMPK to regulate TORC1 signaling. May interact with PRDX1. Post-translationally, phosphorylated by ULK1 at multiple sites. Ubiquitinated at Lys-175 by RNF167 via 'Lys-63'-linked polyubiquitination in response to leucine deprivation: ubiquitination promotes SESN2-interaction with the GATOR2 complex, leading to inhibit the TORC1 signaling pathway. Deubiquitinated at Lys-175 by STAMBPL1, promoting the TORC1 signaling pathway. Ubiquitinated by RNF186; ubiquitination mediates proteasomal degradation.

Its subcellular location is the cytoplasm. The enzyme catalyses a hydroperoxide + L-cysteinyl-[protein] = S-hydroxy-L-cysteinyl-[protein] + an alcohol. Functions as an intracellular leucine sensor that negatively regulates the mTORC1 signaling pathway through the GATOR complex. In absence of leucine, binds the GATOR subcomplex GATOR2 and prevents mTORC1 signaling. Binding of leucine to SESN2 disrupts its interaction with GATOR2 thereby activating the TORC1 signaling pathway. This stress-inducible metabolic regulator also plays a role in protection against oxidative and genotoxic stresses. May negatively regulate protein translation in response to endoplasmic reticulum stress, via mTORC1. May positively regulate the transcription by NFE2L2 of genes involved in the response to oxidative stress by facilitating the SQSTM1-mediated autophagic degradation of KEAP1. May also mediate TP53 inhibition of TORC1 signaling upon genotoxic stress. Moreover, may prevent the accumulation of reactive oxygen species (ROS) through the alkylhydroperoxide reductase activity born by the N-terminal domain of the protein. Was originally reported to contribute to oxidative stress resistance by reducing PRDX1. However, this could not be confirmed. The sequence is that of Sestrin-2 from Pongo abelii (Sumatran orangutan).